The primary structure comprises 562 residues: Dihydroxy-acid dehydratase (562 aa).

Aspartate 80 contributes to the Mg(2+) binding site. Cysteine 121 is a [2Fe-2S] cluster binding site. 2 residues coordinate Mg(2+): aspartate 122 and lysine 123. Lysine 123 carries the N6-carboxylysine modification. Cysteine 194 lines the [2Fe-2S] cluster pocket. Mg(2+) is bound at residue glutamate 446. Catalysis depends on serine 472, which acts as the Proton acceptor.

This sequence belongs to the IlvD/Edd family. As to quaternary structure, homodimer. [2Fe-2S] cluster serves as cofactor. Mg(2+) is required as a cofactor.

It catalyses the reaction (2R)-2,3-dihydroxy-3-methylbutanoate = 3-methyl-2-oxobutanoate + H2O. The catalysed reaction is (2R,3R)-2,3-dihydroxy-3-methylpentanoate = (S)-3-methyl-2-oxopentanoate + H2O. It functions in the pathway amino-acid biosynthesis; L-isoleucine biosynthesis; L-isoleucine from 2-oxobutanoate: step 3/4. Its pathway is amino-acid biosynthesis; L-valine biosynthesis; L-valine from pyruvate: step 3/4. Functions in the biosynthesis of branched-chain amino acids. Catalyzes the dehydration of (2R,3R)-2,3-dihydroxy-3-methylpentanoate (2,3-dihydroxy-3-methylvalerate) into 2-oxo-3-methylpentanoate (2-oxo-3-methylvalerate) and of (2R)-2,3-dihydroxy-3-methylbutanoate (2,3-dihydroxyisovalerate) into 2-oxo-3-methylbutanoate (2-oxoisovalerate), the penultimate precursor to L-isoleucine and L-valine, respectively. The chain is Dihydroxy-acid dehydratase from Staphylococcus epidermidis (strain ATCC 35984 / DSM 28319 / BCRC 17069 / CCUG 31568 / BM 3577 / RP62A).